A 344-amino-acid polypeptide reads, in one-letter code: Phosphoribosylformylglycinamidine cyclo-ligase (344 aa).

It belongs to the AIR synthase family.

The protein localises to the cytoplasm. The enzyme catalyses 2-formamido-N(1)-(5-O-phospho-beta-D-ribosyl)acetamidine + ATP = 5-amino-1-(5-phospho-beta-D-ribosyl)imidazole + ADP + phosphate + H(+). It functions in the pathway purine metabolism; IMP biosynthesis via de novo pathway; 5-amino-1-(5-phospho-D-ribosyl)imidazole from N(2)-formyl-N(1)-(5-phospho-D-ribosyl)glycinamide: step 2/2. The polypeptide is Phosphoribosylformylglycinamidine cyclo-ligase (Synechococcus sp. (strain RCC307)).